The chain runs to 81 residues: Small ribosomal subunit protein bS16 (81 aa).

The protein belongs to the bacterial ribosomal protein bS16 family.

The protein is Small ribosomal subunit protein bS16 of Caldicellulosiruptor saccharolyticus (strain ATCC 43494 / DSM 8903 / Tp8T 6331).